We begin with the raw amino-acid sequence, 344 residues long: 4-dimethylallyltryptophan N-methyltransferase easF (344 aa).

It belongs to the methyltransferase superfamily. Homodimer.

It carries out the reaction 4-(3-methylbut-2-enyl)-L-tryptophan + S-adenosyl-L-methionine = 4-(3-methylbut-2-enyl)-L-abrine + S-adenosyl-L-homocysteine + H(+). It participates in alkaloid biosynthesis; ergot alkaloid biosynthesis. Functionally, 4-dimethylallyltryptophan N-methyltransferase; part of the gene cluster that mediates the biosynthesis of fungal ergot alkaloid. DmaW catalyzes the first step of ergot alkaloid biosynthesis by condensing dimethylallyl diphosphate (DMAP) and tryptophan to form 4-dimethylallyl-L-tryptophan. The second step is catalyzed by the methyltransferase easF that methylates 4-dimethylallyl-L-tryptophan in the presence of S-adenosyl-L-methionine, resulting in the formation of 4-dimethylallyl-L-abrine. The catalase easC and the FAD-dependent oxidoreductase easE then transform 4-dimethylallyl-L-abrine to chanoclavine-I which is further oxidized by easD in the presence of NAD(+), resulting in the formation of chanoclavine-I aldehyde. Agroclavine dehydrogenase easG then mediates the conversion of chanoclavine-I aldehyde to agroclavine via a non-enzymatic adduct reaction: the substrate is an iminium intermediate that is formed spontaneously from chanoclavine-I aldehyde in the presence of glutathione. The presence of easA is not required to complete this reaction. Further conversion of agroclavine to paspalic acid is a two-step process involving oxidation of agroclavine to elymoclavine and of elymoclavine to paspalic acid, the second step being performed by the elymoclavine oxidase cloA. Paspalic acid is then further converted to D-lysergic acid. Ergopeptines are assembled from D-lysergic acid and three different amino acids by the D-lysergyl-peptide-synthetases composed each of a monomudular and a trimodular nonribosomal peptide synthetase subunit. LpsB and lpsC encode the monomodular subunits responsible for D-lysergic acid activation and incorporation into the ergopeptine backbone. LpsA1 and A2 subunits encode the trimodular nonribosomal peptide synthetase assembling the tripeptide portion of ergopeptines. LpsA1 is responsible for formation of the major ergopeptine, ergotamine, and lpsA2 for alpha-ergocryptine, the minor ergopeptine of the total alkaloid mixture elaborated by C.purpurea. D-lysergyl-tripeptides are assembled by the nonribosomal peptide synthetases and released as N-(D-lysergyl-aminoacyl)-lactams. Cyclolization of the D-lysergyl-tripeptides is performed by the Fe(2+)/2-ketoglutarate-dependent dioxygenase easH which introduces a hydroxyl group into N-(D-lysergyl-aminoacyl)-lactam at alpha-C of the aminoacyl residue followed by spontaneous condensation with the terminal lactam carbonyl group. This chain is 4-dimethylallyltryptophan N-methyltransferase easF, found in Claviceps purpurea (Ergot fungus).